Reading from the N-terminus, the 104-residue chain is Large ribosomal subunit protein uL24 (104 aa).

This sequence belongs to the universal ribosomal protein uL24 family. As to quaternary structure, part of the 50S ribosomal subunit.

One of two assembly initiator proteins, it binds directly to the 5'-end of the 23S rRNA, where it nucleates assembly of the 50S subunit. Functionally, one of the proteins that surrounds the polypeptide exit tunnel on the outside of the subunit. The polypeptide is Large ribosomal subunit protein uL24 (Flavobacterium johnsoniae (strain ATCC 17061 / DSM 2064 / JCM 8514 / BCRC 14874 / CCUG 350202 / NBRC 14942 / NCIMB 11054 / UW101) (Cytophaga johnsonae)).